We begin with the raw amino-acid sequence, 268 residues long: Tryptophan synthase alpha chain (268 aa).

Residues Glu49 and Asp60 each act as proton acceptor in the active site.

The protein belongs to the TrpA family. As to quaternary structure, tetramer of two alpha and two beta chains.

It carries out the reaction (1S,2R)-1-C-(indol-3-yl)glycerol 3-phosphate + L-serine = D-glyceraldehyde 3-phosphate + L-tryptophan + H2O. It participates in amino-acid biosynthesis; L-tryptophan biosynthesis; L-tryptophan from chorismate: step 5/5. The alpha subunit is responsible for the aldol cleavage of indoleglycerol phosphate to indole and glyceraldehyde 3-phosphate. This chain is Tryptophan synthase alpha chain, found in Xanthomonas axonopodis pv. citri (strain 306).